The primary structure comprises 715 residues: Polyribonucleotide nucleotidyltransferase (715 aa).

Asp491 and Asp497 together coordinate Mg(2+). Positions 558–617 constitute a KH domain; that stretch reads PKIMTMTINPEKIRDVIGPQGRVINKIIEETGVKIDIEQDGRVFIASINHEANLRAKQII. The S1 motif domain maps to 627 to 695; that stretch reads GQVYLGTVKR…DQGRVNLSRK (69 aa).

It belongs to the polyribonucleotide nucleotidyltransferase family. It depends on Mg(2+) as a cofactor.

It is found in the cytoplasm. The enzyme catalyses RNA(n+1) + phosphate = RNA(n) + a ribonucleoside 5'-diphosphate. Involved in mRNA degradation. Catalyzes the phosphorolysis of single-stranded polyribonucleotides processively in the 3'- to 5'-direction. The sequence is that of Polyribonucleotide nucleotidyltransferase from Brevibacillus brevis (strain 47 / JCM 6285 / NBRC 100599).